Reading from the N-terminus, the 200-residue chain is MARVLVLLSVVVASLLFSQGATFESQRLFNNAVIRVQHLHQLAAKMMDDFEEALLPEERKQLSKIFPLSFCNSDSIEAPAGKDEAQKSSVLKLLHTSYRLIESWEFPSRNLGNPNHISEKLADLKMGIGVLIEGCVDGQTGLDENDSLAPPFEDFYQTLSEGNLRKSFRLLSCFKKDMHKVETYLSVAKCRRSLDSNCTL.

Residues 1–22 form the signal peptide; it reads MARVLVLLSVVVASLLFSQGAT. H38 provides a ligand contact to Zn(2+). C71 and C173 form a disulfide bridge. Residue E182 coordinates Zn(2+). Cysteines 190 and 198 form a disulfide.

The protein belongs to the somatotropin/prolactin family.

The protein resides in the secreted. Growth hormone plays an important role in growth control and is involved in the regulation of several anabolic processes. Implicated as an osmoregulatory substance important for seawater adaptation. The sequence is that of Somatotropin (gh) from Ictalurus punctatus (Channel catfish).